The primary structure comprises 335 residues: Ferrochelatase (335 aa).

Fe cation-binding residues include His-194 and Glu-275.

The protein belongs to the ferrochelatase family.

The protein localises to the cytoplasm. The enzyme catalyses heme b + 2 H(+) = protoporphyrin IX + Fe(2+). It functions in the pathway porphyrin-containing compound metabolism; protoheme biosynthesis; protoheme from protoporphyrin-IX: step 1/1. Its function is as follows. Catalyzes the ferrous insertion into protoporphyrin IX. The chain is Ferrochelatase from Sodalis glossinidius (strain morsitans).